A 185-amino-acid chain; its full sequence is MSQAIMKQAEERMEKAHLSLKKELATLRAGRANVSILDPVQVDYYGSPTPLNQVANVNTPEARLILITPWDKSMVTEIEKAIQRADLGLAPSSDGTVIRLAIPPLTEDRRKELVKLVKKYTEEGKVALRNIRRDTNEQLKKQEKDGVLTEDDLRGYTEDVQTLTDKFVKVLDQTAADKEQEIMEV.

This sequence belongs to the RRF family.

The protein resides in the cytoplasm. Functionally, responsible for the release of ribosomes from messenger RNA at the termination of protein biosynthesis. May increase the efficiency of translation by recycling ribosomes from one round of translation to another. This chain is Ribosome-recycling factor, found in Exiguobacterium sibiricum (strain DSM 17290 / CCUG 55495 / CIP 109462 / JCM 13490 / 255-15).